We begin with the raw amino-acid sequence, 813 residues long: LPS-assembly protein LptD (813 aa).

An N-terminal signal peptide occupies residues 1–22 (MRRALRLLPLPLSIAICLPAMA).

It belongs to the LptD family. In terms of assembly, component of the lipopolysaccharide transport and assembly complex. Interacts with LptE and LptA.

Its subcellular location is the cell outer membrane. Functionally, together with LptE, is involved in the assembly of lipopolysaccharide (LPS) at the surface of the outer membrane. This Xanthomonas oryzae pv. oryzae (strain MAFF 311018) protein is LPS-assembly protein LptD.